Reading from the N-terminus, the 100-residue chain is ATP synthase subunit g 2, mitochondrial (100 aa).

It belongs to the ATPase g subunit family. In terms of assembly, F-type ATPases have 2 components, CF(1) - the catalytic core - and CF(0) - the membrane proton channel. CF(0) seems to have nine subunits: a, b, c, d, e, f, g, F6 and 8 (or A6L).

It localises to the mitochondrion membrane. Functionally, mitochondrial membrane ATP synthase (F(1)F(0) ATP synthase or Complex V) produces ATP from ADP in the presence of a proton gradient across the membrane which is generated by electron transport complexes of the respiratory chain. F-type ATPases consist of two structural domains, F(1) - containing the extramembraneous catalytic core, and F(0) - containing the membrane proton channel, linked together by a central stalk and a peripheral stalk. During catalysis, ATP synthesis in the catalytic domain of F(1) is coupled via a rotary mechanism of the central stalk subunits to proton translocation. Part of the complex F(0) domain. Minor subunit located with subunit a in the membrane. The polypeptide is ATP synthase subunit g 2, mitochondrial (Homo sapiens (Human)).